Reading from the N-terminus, the 156-residue chain is D-aminoacyl-tRNA deacylase (156 aa).

Residues 139–140 carry the Gly-cisPro motif, important for rejection of L-amino acids motif; it reads GP.

This sequence belongs to the DTD family. Homodimer.

It is found in the cytoplasm. It catalyses the reaction glycyl-tRNA(Ala) + H2O = tRNA(Ala) + glycine + H(+). The catalysed reaction is a D-aminoacyl-tRNA + H2O = a tRNA + a D-alpha-amino acid + H(+). In terms of biological role, an aminoacyl-tRNA editing enzyme that deacylates mischarged D-aminoacyl-tRNAs. Also deacylates mischarged glycyl-tRNA(Ala), protecting cells against glycine mischarging by AlaRS. Acts via tRNA-based rather than protein-based catalysis; rejects L-amino acids rather than detecting D-amino acids in the active site. By recycling D-aminoacyl-tRNA to D-amino acids and free tRNA molecules, this enzyme counteracts the toxicity associated with the formation of D-aminoacyl-tRNA entities in vivo and helps enforce protein L-homochirality. The protein is D-aminoacyl-tRNA deacylase of Marinobacter nauticus (strain ATCC 700491 / DSM 11845 / VT8) (Marinobacter aquaeolei).